Reading from the N-terminus, the 1007-residue chain is Kinesin-like protein KIN-14F (1007 aa).

The Calponin-homology (CH) domain maps to 41–187; sequence AARRNEAAGW…CVLALKSYGD (147 aa). The Kinesin motor domain maps to 390–715; that stretch reads SIRVYCRVRP…LKFAERVSTV (326 aa). Position 472–479 (472–479) interacts with ATP; sequence GQTGSGKT. Residues 718–748 adopt a coiled-coil conformation; sequence GAARLNKESGEVKELKEQIARLKSSLAMKDS. Positions 885–904 are enriched in basic and acidic residues; the sequence is KQYLRNNSRKKDGNEFEQQR. 2 disordered regions span residues 885 to 924 and 944 to 1007; these read KQYL…ATSD and SENG…AGTK. The span at 963–1001 shows a compositional bias: polar residues; the sequence is TRTPLHSQIPSASRKTSNGNRSGRQPLSGSDSRRLSSNG.

Belongs to the TRAFAC class myosin-kinesin ATPase superfamily. Kinesin family. KIN-14 subfamily.

In Oryza sativa subsp. japonica (Rice), this protein is Kinesin-like protein KIN-14F.